Reading from the N-terminus, the 94-residue chain is MNAHQIIIRPLITEKNTNLMRFNKYSFEVDRNATKQQIKRAIEEIFSVRVTAVHTMNVRGKLRRRGRQYGYTPDWKKAIVTLAEGDRIDLFEGA.

It belongs to the universal ribosomal protein uL23 family. As to quaternary structure, part of the 50S ribosomal subunit. Contacts protein L29, and trigger factor when it is bound to the ribosome.

Its function is as follows. One of the early assembly proteins it binds 23S rRNA. One of the proteins that surrounds the polypeptide exit tunnel on the outside of the ribosome. Forms the main docking site for trigger factor binding to the ribosome. This is Large ribosomal subunit protein uL23 from Roseiflexus castenholzii (strain DSM 13941 / HLO8).